The following is a 58-amino-acid chain: Large ribosomal subunit protein uL30 (58 aa).

The protein belongs to the universal ribosomal protein uL30 family. In terms of assembly, part of the 50S ribosomal subunit.

This chain is Large ribosomal subunit protein uL30, found in Wigglesworthia glossinidia brevipalpis.